The following is a 258-amino-acid chain: Indole-3-glycerol phosphate synthase (258 aa).

This sequence belongs to the TrpC family.

The catalysed reaction is 1-(2-carboxyphenylamino)-1-deoxy-D-ribulose 5-phosphate + H(+) = (1S,2R)-1-C-(indol-3-yl)glycerol 3-phosphate + CO2 + H2O. Its pathway is amino-acid biosynthesis; L-tryptophan biosynthesis; L-tryptophan from chorismate: step 4/5. The polypeptide is Indole-3-glycerol phosphate synthase (Endomicrobium trichonymphae).